The primary structure comprises 278 residues: Ribosomal RNA small subunit methyltransferase A (278 aa).

S-adenosyl-L-methionine is bound by residues asparagine 28, leucine 30, glycine 55, glutamate 77, aspartate 103, and asparagine 122.

Belongs to the class I-like SAM-binding methyltransferase superfamily. rRNA adenine N(6)-methyltransferase family. RsmA subfamily.

It localises to the cytoplasm. The enzyme catalyses adenosine(1518)/adenosine(1519) in 16S rRNA + 4 S-adenosyl-L-methionine = N(6)-dimethyladenosine(1518)/N(6)-dimethyladenosine(1519) in 16S rRNA + 4 S-adenosyl-L-homocysteine + 4 H(+). In terms of biological role, specifically dimethylates two adjacent adenosines (A1518 and A1519) in the loop of a conserved hairpin near the 3'-end of 16S rRNA in the 30S particle. May play a critical role in biogenesis of 30S subunits. The chain is Ribosomal RNA small subunit methyltransferase A from Cereibacter sphaeroides (strain ATCC 17023 / DSM 158 / JCM 6121 / CCUG 31486 / LMG 2827 / NBRC 12203 / NCIMB 8253 / ATH 2.4.1.) (Rhodobacter sphaeroides).